The sequence spans 445 residues: DNA repair protein RadA (445 aa).

A C4-type zinc finger spans residues 10–27 (CSNCANISNKWSGQCFDC). 90–97 (GEPGIGKS) serves as a coordination point for ATP. A RadA KNRFG motif motif is present at residues 249–253 (KNRFG). The segment at 348-445 (EIYLSIAGGL…HLQELKEIIK (98 aa)) is lon-protease-like.

Belongs to the RecA family. RadA subfamily.

DNA-dependent ATPase involved in processing of recombination intermediates, plays a role in repairing DNA breaks. Stimulates the branch migration of RecA-mediated strand transfer reactions, allowing the 3' invading strand to extend heteroduplex DNA faster. Binds ssDNA in the presence of ADP but not other nucleotides, has ATPase activity that is stimulated by ssDNA and various branched DNA structures, but inhibited by SSB. Does not have RecA's homology-searching function. The chain is DNA repair protein RadA from Rickettsia prowazekii (strain Madrid E).